Here is a 266-residue protein sequence, read N- to C-terminus: Pre-mRNA-splicing factor PRP11 (266 aa).

The disordered stretch occupies residues 1–21 (MNYLEGVGSKKGGGGIASESQ). The Matrin-type zinc-finger motif lies at 66 to 96 (LVCKLCNTMHMSWSSVERHLGGKKHGLNVLR).

The protein belongs to the SF3A2 family. Belongs to the CWC complex (or CEF1-associated complex), a spliceosome sub-complex reminiscent of a late-stage spliceosome composed of the U2, U5 and U6 snRNAs and at least BUD13, BUD31, BRR2, CDC40, CEF1, CLF1, CUS1, CWC2, CWC15, CWC21, CWC22, CWC23, CWC24, CWC25, CWC27, ECM2, HSH155, IST3, ISY1, LEA1, MSL1, NTC20, PRP8, PRP9, PRP11, PRP19, PRP21, PRP22, PRP45, PRP46, SLU7, SMB1, SMD1, SMD2, SMD3, SMX2, SMX3, SNT309, SNU114, SPP2, SYF1, SYF2, RSE1 and YJU2. Interacts with CUS2.

The protein resides in the nucleus. Functionally, mRNA splicing factors, PRP9, PRP11, and PRP21, are necessary for addition of the U2 snRNP to the pre-mRNA in an early step of spliceosome assembly. The sequence is that of Pre-mRNA-splicing factor PRP11 (PRP11) from Saccharomyces cerevisiae (strain ATCC 204508 / S288c) (Baker's yeast).